The chain runs to 457 residues: Keratin, type II cytoskeletal 7 (457 aa).

S2 bears the N-acetylserine mark. S2 carries the post-translational modification Phosphoserine. The tract at residues 2 to 84 (SIHFSSRSTA…DPTIQQVRQE (83 aa)) is head. S7 is a glycosylation site (O-linked (GlcNAc) serine). Dimethylated arginine; alternate is present on R15. At R15 the chain carries Omega-N-methylarginine; alternate. A phosphoserine mark is found at S47 and S65. The segment at 84–120 (EEREQIKTLNNKFASFIDKVRFLEQQNKMLETKWALL) is coil 1A. Residues 85 to 397 (EREQIKTLNN…KLLEGEESRL (313 aa)) form the IF rod domain. T91 carries the phosphothreonine modification. Residues 121–138 (QEQKSAKSSQLPRIFEAQ) are linker 1. Residue K124 forms a Glycyl lysine isopeptide (Lys-Gly) (interchain with G-Cter in SUMO2) linkage. A coil 1B region spans residues 139–230 (IAGLRQQLET…TLHETELAEL (92 aa)). K173 carries the N6-acetyllysine modification. Residues S211, S246, and S248 each carry the phosphoserine modification. The segment at 231 to 254 (QSQISDTSVVLSMDNSRSLDLDGI) is linker 12. The coil 2 stretch occupies residues 255–393 (IADVKAQYEE…ATYRKLLEGE (139 aa)). Glycyl lysine isopeptide (Lys-Gly) (interchain with G-Cter in SUMO2) cross-links involve residues K259 and K280. T283 is modified (phosphothreonine). Residues K290 and K325 each participate in a glycyl lysine isopeptide (Lys-Gly) (interchain with G-Cter in SUMO2) cross-link. Positions 394–457 (ESRLSGDGMG…TSTTRRGTHN (64 aa)) are tail.

The protein belongs to the intermediate filament family. In terms of assembly, heterotetramer of two type I and two type II keratins. Interacts with eukaryotic translation initiator factor 3 (eIF3) subunit EIF3S10. Interacts with GPER1. Post-translationally, arg-15 is dimethylated, probably to asymmetric dimethylarginine. Expressed in most simple epithelia tested including liver, lactating mammary gland, lung, kidney, stomach, duodenum, colon, oviduct, uterus, pancreas, epididymis, prostate, preputial gland and mesothelium, and in most stratified epithelia tested including dorsal skin, paw/toe, tail, tongue, cervix, forestomach, and bladder. Also expressed in Henle layer of the inner root sheath of whisker follicle.

Blocks interferon-dependent interphase and stimulates DNA synthesis in cells. The sequence is that of Keratin, type II cytoskeletal 7 from Mus musculus (Mouse).